A 370-amino-acid chain; its full sequence is Probable aspartic-type endopeptidase ARB_04018 (370 aa).

A signal peptide spans 1-21 (MWHSPFSTAFTLFLGFFTLTL). Residues Asn80 and Asn102 are each glycosylated (N-linked (GlcNAc...) asparagine). In terms of domain architecture, Peptidase A1 spans 94 to 367 (FVNEITIGND…DHDGPKMGFA (274 aa)). The active site involves Asp110. A glycan (N-linked (GlcNAc...) asparagine) is linked at Asn251. Residue Asp261 is part of the active site. The N-linked (GlcNAc...) asparagine glycan is linked to Asn298.

Belongs to the peptidase A1 family.

It localises to the secreted. Its function is as follows. Probable aspartic-type endopeptidase which contributes to virulence. In Arthroderma benhamiae (strain ATCC MYA-4681 / CBS 112371) (Trichophyton mentagrophytes), this protein is Probable aspartic-type endopeptidase ARB_04018.